Consider the following 201-residue polypeptide: Ras-related protein Ral-a (201 aa).

GTP is bound at residue 18–25; it reads GSGGVGKS. The Effector region signature appears at 40 to 48; the sequence is YEPTKADSY. Residues 65–69 and 124–127 each bind GTP; these read DTAGQ and NKCD. Cysteine 198 is subject to Cysteine methyl ester. The S-geranylgeranyl cysteine moiety is linked to residue cysteine 198. A propeptide spans 199 to 201 (removed in mature form); it reads TLL.

The protein belongs to the small GTPase superfamily. Ras family.

Its subcellular location is the cell membrane. It localises to the cleavage furrow. The protein localises to the midbody. It is found in the midbody ring. It catalyses the reaction GTP + H2O = GDP + phosphate + H(+). The polypeptide is Ras-related protein Ral-a (Rala) (Drosophila melanogaster (Fruit fly)).